The chain runs to 308 residues: Olfactory receptor 5H19 (308 aa).

The Extracellular segment spans residues 1 to 27; sequence MEKNATLLTEFVLTGLSHQPLWNIPLF. N-linked (GlcNAc...) asparagine glycosylation occurs at Asn4. The helical transmembrane segment at 28 to 48 threads the bilayer; sequence LVFLVIYLITIVGNVSLITLI. Residues 49 to 55 are Cytoplasmic-facing; sequence WTDPHLH. Residues 56–76 form a helical membrane-spanning segment; sequence IPMYLFLGSLAFVDTSISSIV. Topologically, residues 77 to 92 are extracellular; it reads VPKMLLNFFGKSKVIT. Residues 93–113 form a helical membrane-spanning segment; it reads LSECMAQFFLFNISATTECFL. Cys96 and Cys188 are disulfide-bonded. Residues 114 to 143 lie on the Cytoplasmic side of the membrane; it reads LAAMAYDRYVAICKPLLYPVVMTNGLCVWL. A helical membrane pass occupies residues 144-164; sequence IALSFVAGIIHALIHEGFLLR. Residues 165-197 lie on the Extracellular side of the membrane; sequence LTFCNSNMIHNFYCDIISLLKISCTDTSLNYLI. A helical transmembrane segment spans residues 198-218; the sequence is VFIFSGSIQVFTISTILVSYT. Over 219–238 the chain is Cytoplasmic; that stretch reads IILFTILKKKSAKGIKKAFS. The helical transmembrane segment at 239 to 259 threads the bilayer; the sequence is TCGAHLLSVSLYYGPLLFMYV. Topologically, residues 260–270 are extracellular; that stretch reads HPASSEVDDQD. The helical transmembrane segment at 271–291 threads the bilayer; sequence MIDSLFYTVIIPVLNPIIYSL. Over 292–308 the chain is Cytoplasmic; the sequence is RNKQVIDSLAKFLKRNV.

It belongs to the G-protein coupled receptor 1 family.

The protein localises to the cell membrane. In terms of biological role, potential odorant receptor. This Mus musculus (Mouse) protein is Olfactory receptor 5H19.